A 162-amino-acid polypeptide reads, in one-letter code: Tegument protein BLRF2 (162 aa).

Positions Val-12–Gly-43 form a coiled coil. The disordered stretch occupies residues Gly-121 to Asp-162. Positions Arg-151–Asp-162 are enriched in basic and acidic residues.

It belongs to the herpesviridae BLRF2 family. As to quaternary structure, homooligomer; homooligomerizes and binds double-stranded DNA (dsDNA) cooperatively. Interacts with host CGAS.

It localises to the virion tegument. It is found in the host cytoplasm. Functionally, plays a role in the inhibition of host innate immune system by targeting the CGAS enzymatic activity which is the principal cytosolic DNA sensor that detects invading viral DNA. Acts by inhibiting CGAS-DNA phase separation: directly binds double-stranded DNA (dsDNA) in a length dependent but sequence independent manner and is able to form DNA-induced phase separation in infected cells. DNA phase separation of ORF52 mediates disruption of liquid-like droplets in which CGAS is activated, thereby preventing CGAS activity. This chain is Tegument protein BLRF2, found in Epstein-Barr virus (strain GD1) (HHV-4).